A 194-amino-acid chain; its full sequence is Probable GTP-binding protein EngB (194 aa).

The 173-residue stretch at 22 to 194 (GKPEIALVGR…EVWHWIEQHI (173 aa)) folds into the EngB-type G domain. Residues 30 to 37 (GRSNVGKS), 57 to 61 (GKTQT), 75 to 78 (DVPG), 142 to 145 (TKSD), and 175 to 177 (FSS) contribute to the GTP site. Mg(2+) is bound by residues S37 and T59.

It belongs to the TRAFAC class TrmE-Era-EngA-EngB-Septin-like GTPase superfamily. EngB GTPase family. Mg(2+) is required as a cofactor.

Functionally, necessary for normal cell division and for the maintenance of normal septation. This Leuconostoc mesenteroides subsp. mesenteroides (strain ATCC 8293 / DSM 20343 / BCRC 11652 / CCM 1803 / JCM 6124 / NCDO 523 / NBRC 100496 / NCIMB 8023 / NCTC 12954 / NRRL B-1118 / 37Y) protein is Probable GTP-binding protein EngB.